We begin with the raw amino-acid sequence, 583 residues long: Threonine--tRNA ligase (583 aa).

A catalytic region spans residues 185–478 (DHRKLGRELD…LVEHYGGAFP (294 aa)). Zn(2+) contacts are provided by cysteine 278, histidine 329, and histidine 455.

This sequence belongs to the class-II aminoacyl-tRNA synthetase family. Homodimer. The cofactor is Zn(2+).

It localises to the cytoplasm. The catalysed reaction is tRNA(Thr) + L-threonine + ATP = L-threonyl-tRNA(Thr) + AMP + diphosphate + H(+). In terms of biological role, catalyzes the attachment of threonine to tRNA(Thr) in a two-step reaction: L-threonine is first activated by ATP to form Thr-AMP and then transferred to the acceptor end of tRNA(Thr). Also edits incorrectly charged L-seryl-tRNA(Thr). The protein is Threonine--tRNA ligase of Borrelia turicatae (strain 91E135).